The sequence spans 170 residues: NADH-quinone oxidoreductase subunit B (170 aa).

[4Fe-4S] cluster contacts are provided by cysteine 46, cysteine 47, cysteine 111, and cysteine 141.

The protein belongs to the complex I 20 kDa subunit family. NDH-1 is composed of 14 different subunits. Subunits NuoB, C, D, E, F, and G constitute the peripheral sector of the complex. [4Fe-4S] cluster serves as cofactor.

The protein resides in the cell membrane. It catalyses the reaction a quinone + NADH + 5 H(+)(in) = a quinol + NAD(+) + 4 H(+)(out). Its function is as follows. NDH-1 shuttles electrons from NADH, via FMN and iron-sulfur (Fe-S) centers, to quinones in the respiratory chain. The immediate electron acceptor for the enzyme in this species is believed to be a menaquinone. Couples the redox reaction to proton translocation (for every two electrons transferred, four hydrogen ions are translocated across the cytoplasmic membrane), and thus conserves the redox energy in a proton gradient. This Geobacillus sp. (strain WCH70) protein is NADH-quinone oxidoreductase subunit B.